The sequence spans 325 residues: Basic membrane protein A (325 aa).

Positions 1 to 3 (FLS) are cleaved as a signal peptide. Residue Cys-4 is the site of N-palmitoyl cysteine attachment. Cys-4 carries the S-diacylglycerol cysteine lipid modification.

The protein belongs to the BMP lipoprotein family. Monomer.

It localises to the cell inner membrane. Its function is as follows. Immunogenic protein. May be part of an ABC-type nucleoside uptake system involved in the purine salvage pathway. The protein is Basic membrane protein A (bmpA) of Borreliella afzelii (Borrelia afzelii).